A 444-amino-acid chain; its full sequence is ATP-dependent RNA helicase SrmB (444 aa).

Residues 4 to 32 (TTFSELELDESLLEALQDKGFTRPTAIQA) carry the Q motif motif. The Helicase ATP-binding domain maps to 35 to 209 (IPPALDGRDV…AERLLEDPVE (175 aa)). 48-55 (APTGTGKT) serves as a coordination point for ATP. The DEAD box motif lies at 157–160 (DEAD). Positions 238 to 387 (LLVHLLKQPE…ELRPKTRAPS (150 aa)) constitute a Helicase C-terminal domain. The span at 382–391 (KTRAPSEKQT) shows a compositional bias: basic and acidic residues. The disordered stretch occupies residues 382 to 444 (KTRAPSEKQT…TGVPPQTTEE (63 aa)). 2 stretches are compositionally biased toward basic residues: residues 394–406 (PSKK…AEKK) and 414–432 (PRVK…RRKP).

This sequence belongs to the DEAD box helicase family. SrmB subfamily. Interacts with the 50S ribosomal subunit. Forms a complex with the 50S ribosomal proteins L4 and L24, and a region near the 5'-end of 23S rRNA.

Its subcellular location is the cytoplasm. The catalysed reaction is ATP + H2O = ADP + phosphate + H(+). DEAD-box RNA helicase involved in the assembly of the 50S ribosomal subunit at low temperature. Exhibits RNA-stimulated ATP hydrolysis and RNA unwinding activity. Acts before DeaD. The polypeptide is ATP-dependent RNA helicase SrmB (Escherichia coli (strain K12)).